The following is a 181-amino-acid chain: Adenine phosphoribosyltransferase (181 aa).

It belongs to the purine/pyrimidine phosphoribosyltransferase family. In terms of assembly, homodimer.

It is found in the cytoplasm. It carries out the reaction AMP + diphosphate = 5-phospho-alpha-D-ribose 1-diphosphate + adenine. It participates in purine metabolism; AMP biosynthesis via salvage pathway; AMP from adenine: step 1/1. Functionally, catalyzes a salvage reaction resulting in the formation of AMP, that is energically less costly than de novo synthesis. The chain is Adenine phosphoribosyltransferase (Aprt) from Drosophila pseudoobscura pseudoobscura (Fruit fly).